A 208-amino-acid chain; its full sequence is Recombination protein RecR (208 aa).

The C4-type zinc finger occupies 57-72 (CALCNTLTEQEVCVTC). Residues 80–187 (SKLCVVETPA…QVTRLARGVP (108 aa)) form the Toprim domain.

Belongs to the RecR family.

May play a role in DNA repair. It seems to be involved in an RecBC-independent recombinational process of DNA repair. It may act with RecF and RecO. This Polaromonas naphthalenivorans (strain CJ2) protein is Recombination protein RecR.